The sequence spans 415 residues: Tyrosine--tRNA ligase (415 aa).

Residues 54–63 (PTGSNIHLGH) carry the 'HIGH' region motif. A 'KMSKS' region motif is present at residues 248-252 (KMSKS). Residue lysine 251 coordinates ATP. The 65-residue stretch at 351–415 (AKAFYLLSAV…GKKTFRRLTA (65 aa)) folds into the S4 RNA-binding domain.

The protein belongs to the class-I aminoacyl-tRNA synthetase family. TyrS type 2 subfamily. As to quaternary structure, homodimer.

Its subcellular location is the cytoplasm. It carries out the reaction tRNA(Tyr) + L-tyrosine + ATP = L-tyrosyl-tRNA(Tyr) + AMP + diphosphate + H(+). Its function is as follows. Catalyzes the attachment of tyrosine to tRNA(Tyr) in a two-step reaction: tyrosine is first activated by ATP to form Tyr-AMP and then transferred to the acceptor end of tRNA(Tyr). The protein is Tyrosine--tRNA ligase of Parasynechococcus marenigrum (strain WH8102).